The following is a 486-amino-acid chain: Hexosaminidase D (486 aa).

Residue Glu149 is the Proton donor of the active site.

This sequence belongs to the glycosyl hydrolase 20 family. As to quaternary structure, homodimer; disulfide-linked. Expressed in synovial fibroblasts and synovial membranes.

The protein resides in the cytoplasm. Its subcellular location is the nucleus. It localises to the extracellular vesicle. It carries out the reaction Hydrolysis of terminal non-reducing N-acetyl-D-hexosamine residues in N-acetyl-beta-D-hexosaminides.. Inhibited by O-(2-acetamido-2-deoxy-D-glucopyranosylidene)amino N-phenylcarbamate (PUGNAc). Inhibited by galacto-NAG-thiazoline. In terms of biological role, has hexosaminidase activity. Responsible for the cleavage of the monosaccharides N-acetylglucosamine (GlcNAc) and N-acetylgalactosamine (GalNAc) from cellular substrates. Has a preference for galactosaminide over glucosaminide substrates. In Homo sapiens (Human), this protein is Hexosaminidase D.